A 574-amino-acid polypeptide reads, in one-letter code: Enolase 4 (574 aa).

Positions 165-175 (EKERRQMEREA) are enriched in basic and acidic residues. The segment at 165–221 (EKERRQMEREASPMPLQPEPSPVTSPAPGKKKGSGKGKKAAVVEKPIPPEETPEAVV) is disordered. Positions 179-189 (PLQPEPSPVTS) are enriched in pro residues. Positions 193 to 203 (GKKKGSGKGKK) are enriched in basic residues. Glu287 is a substrate binding site. The Proton acceptor role is filled by Lys467. Position 518 (Lys518) interacts with substrate.

It belongs to the enolase family.

It carries out the reaction (2R)-2-phosphoglycerate = phosphoenolpyruvate + H2O. It participates in carbohydrate degradation; glycolysis; pyruvate from D-glyceraldehyde 3-phosphate: step 4/5. This chain is Enolase 4 (eno4), found in Xenopus tropicalis (Western clawed frog).